The following is a 127-amino-acid chain: Large ribosomal subunit protein bL17 (127 aa).

This sequence belongs to the bacterial ribosomal protein bL17 family. Part of the 50S ribosomal subunit. Contacts protein L32.

This Stenotrophomonas maltophilia (strain K279a) protein is Large ribosomal subunit protein bL17.